The sequence spans 135 residues: MGSKIVQVFLMLALFATSALAQAPAPTPTATPPPATPPPVATPPPVATPPPAATPAPATPPPAATPAPATTPPSVAPSPADVPTASPPAPEGPTVSPSSAPGPSDASPAPSAAFSNKAFFAGTAFAAIMYAAVLA.

The N-terminal stretch at 1–21 (MGSKIVQVFLMLALFATSALA) is a signal peptide. Gln22 carries the post-translational modification Pyrrolidone carboxylic acid. The tract at residues 22–112 (QAPAPTPTAT…PSDASPAPSA (91 aa)) is disordered. Pro24, Pro26, Pro28, Pro32, Pro33, Pro34, Pro37, Pro38, and Pro39 each carry 4-hydroxyproline. O-linked (Ara...) hydroxyproline glycans are attached at residues Pro24, Pro26, Pro28, Pro32, Pro33, Pro34, Pro37, Pro38, and Pro39. Residues 25 to 76 (APTPTATPPPATPPPVATPPPVATPPPAATPAPATPPPAATPAPATTPPSVA) show a composition bias toward pro residues. The span at 96 to 112 (SPSSAPGPSDASPAPSA) shows a compositional bias: low complexity. The GPI-anchor amidated serine moiety is linked to residue Ser111. Residues 112 to 135 (AAFSNKAFFAGTAFAAIMYAAVLA) constitute a propeptide, removed in mature form.

This sequence belongs to the classical AGP family. In terms of processing, O-glycosylated on hydroxyprolines; noncontiguous hydroxylproline residues are glycosylated with arabinogalactan. As to expression, highly expressed in roots, flowers and leaves.

The protein resides in the cell membrane. Its function is as follows. Proteoglycan that seems to be implicated in diverse developmental roles such as differentiation, cell-cell recognition, embryogenesis and programmed cell death. The sequence is that of Classical arabinogalactan protein 4 (AGP4) from Arabidopsis thaliana (Mouse-ear cress).